A 309-amino-acid polypeptide reads, in one-letter code: MPIRVPDELPAVSFLRNENVFVMASSRAKTQEIRPLKVLILNLMPKKIETENQFLRLLSNSPLQIDIQLLRIDSRESKNTPAEHLNNFYCDFEDIQDENFDGLIVTGAPLGLVDFCDVAYWPQIERVIDWAKNHVTSTLFVCWAVQAALNILYGIPKMTREVKLSGVYQHQTLQQHALLTRGFDETFLAPHSRYADFPTEIIRQYTDLDILAESEQTGAYLFASKDKRLAFVTGHPEYDALTLAGEYCRDNDAGLNPVVPLNYFPDDNPELTPKASWRSHGHLLFANWLNYYVYQITPYDLRHMNPTLE.

Cys142 acts as the Acyl-thioester intermediate in catalysis. Lys163 and Ser192 together coordinate substrate. His235 functions as the Proton acceptor in the catalytic mechanism. Residue Glu237 is part of the active site. Position 249 (Arg249) interacts with substrate.

It belongs to the MetA family.

The protein resides in the cytoplasm. It carries out the reaction L-homoserine + succinyl-CoA = O-succinyl-L-homoserine + CoA. The protein operates within amino-acid biosynthesis; L-methionine biosynthesis via de novo pathway; O-succinyl-L-homoserine from L-homoserine: step 1/1. Transfers a succinyl group from succinyl-CoA to L-homoserine, forming succinyl-L-homoserine. The protein is Homoserine O-succinyltransferase of Serratia proteamaculans (strain 568).